The primary structure comprises 192 residues: Leucine-rich repeat-containing protein 51 (192 aa).

LRR repeat units follow at residues Ser-49 to Val-71, Asn-80 to Phe-101, and Asn-103 to Ala-124. Residues Asn-137 to Trp-175 enclose the LRRCT domain.

It is found in the cytoplasm. This chain is Leucine-rich repeat-containing protein 51, found in Rattus norvegicus (Rat).